The chain runs to 340 residues: HTH-type transcriptional regulator VirS (340 aa).

Residues Glu236–Tyr334 enclose the HTH araC/xylS-type domain. 2 DNA-binding regions (H-T-H motif) span residues Glu254–Gly275 and Leu301–Phe324.

Phosphorylated by PknK. Phosphorylation increases affinity for the mymA promoter.

Regulates the expression of the mymA operon. The polypeptide is HTH-type transcriptional regulator VirS (virS) (Mycobacterium tuberculosis (strain CDC 1551 / Oshkosh)).